Consider the following 113-residue polypeptide: Hydrogenase maturation factor HypA (113 aa).

His2 contributes to the Ni(2+) binding site. Zn(2+) contacts are provided by Cys73, Cys76, Cys89, and Cys92.

This sequence belongs to the HypA/HybF family.

Involved in the maturation of [NiFe] hydrogenases. Required for nickel insertion into the metal center of the hydrogenase. This chain is Hydrogenase maturation factor HypA, found in Azotobacter chroococcum mcd 1.